Here is a 251-residue protein sequence, read N- to C-terminus: Low molecular mass lipoprotein PBMHPC-21 (251 aa).

Residues 1–16 (MKFVVVFASCVLAVSA) form the signal peptide.

This sequence belongs to the 30 kDa lipoprotein family.

Its subcellular location is the secreted. This is Low molecular mass lipoprotein PBMHPC-21 from Bombyx mori (Silk moth).